The primary structure comprises 145 residues: UPF0201 protein Saci_1285 (145 aa).

The protein belongs to the UPF0201 family.

This chain is UPF0201 protein Saci_1285, found in Sulfolobus acidocaldarius (strain ATCC 33909 / DSM 639 / JCM 8929 / NBRC 15157 / NCIMB 11770).